A 376-amino-acid chain; its full sequence is Chaperone protein DnaJ (376 aa).

Residues 5–70 (DYYEVLGVAR…NKRRAYDAHG (66 aa)) enclose the J domain. A CR-type zinc finger spans residues 132–209 (GIERRIEIPT…CHGAGRVEED (78 aa)). Residues C145, C148, C161, C164, C183, C186, C197, and C200 each contribute to the Zn(2+) site. 4 CXXCXGXG motif repeats span residues 145-152 (CEPCHGSG), 161-168 (CATCHGRG), 183-190 (CPHCDGRG), and 197-204 (CKTCHGAG).

Belongs to the DnaJ family. In terms of assembly, homodimer. It depends on Zn(2+) as a cofactor.

The protein resides in the cytoplasm. Its function is as follows. Participates actively in the response to hyperosmotic and heat shock by preventing the aggregation of stress-denatured proteins and by disaggregating proteins, also in an autonomous, DnaK-independent fashion. Unfolded proteins bind initially to DnaJ; upon interaction with the DnaJ-bound protein, DnaK hydrolyzes its bound ATP, resulting in the formation of a stable complex. GrpE releases ADP from DnaK; ATP binding to DnaK triggers the release of the substrate protein, thus completing the reaction cycle. Several rounds of ATP-dependent interactions between DnaJ, DnaK and GrpE are required for fully efficient folding. Also involved, together with DnaK and GrpE, in the DNA replication of plasmids through activation of initiation proteins. The polypeptide is Chaperone protein DnaJ (Xanthomonas campestris pv. campestris (strain 8004)).